A 526-amino-acid polypeptide reads, in one-letter code: Protein translocase subunit SecD (526 aa).

The next 6 membrane-spanning stretches (helical) occupy residues 8–28, 356–376, 379–399, 405–425, 453–473, and 478–498; these read LIVFIFALLLGVGFSVPSLLE, IIALVGGFILVMGFMALYYSM, VIACMALVVNLFLIVAVMAIF, LPGMAGIVLTVGIAVDANIII, AIFDSNITSLIASVLLYAYGT, and GFALTTGIGILASIITAIIGT.

It belongs to the SecD/SecF family. SecD subfamily. As to quaternary structure, forms a complex with SecF. Part of the essential Sec protein translocation apparatus which comprises SecA, SecYEG and auxiliary proteins SecDF-YajC and YidC.

The protein resides in the cell inner membrane. In terms of biological role, part of the Sec protein translocase complex. Interacts with the SecYEG preprotein conducting channel. SecDF uses the proton motive force (PMF) to complete protein translocation after the ATP-dependent function of SecA. This chain is Protein translocase subunit SecD, found in Helicobacter pylori (strain J99 / ATCC 700824) (Campylobacter pylori J99).